A 239-amino-acid chain; its full sequence is Uridylate kinase (239 aa).

Position 13-16 (Lys13–Gly16) interacts with ATP. Residue Gly55 coordinates UMP. 2 residues coordinate ATP: Gly56 and Arg60. UMP is bound by residues Asp75 and Thr136 to Thr143. Positions 163, 169, and 172 each coordinate ATP.

It belongs to the UMP kinase family. As to quaternary structure, homohexamer.

It is found in the cytoplasm. It carries out the reaction UMP + ATP = UDP + ADP. Its pathway is pyrimidine metabolism; CTP biosynthesis via de novo pathway; UDP from UMP (UMPK route): step 1/1. With respect to regulation, inhibited by UTP. Functionally, catalyzes the reversible phosphorylation of UMP to UDP. The protein is Uridylate kinase of Chromobacterium violaceum (strain ATCC 12472 / DSM 30191 / JCM 1249 / CCUG 213 / NBRC 12614 / NCIMB 9131 / NCTC 9757 / MK).